The sequence spans 607 residues: NAD-dependent malic enzyme 2, mitochondrial (607 aa).

The transit peptide at 1-32 (MMWKNIAGLSKAAAAARTHGSRRCFSTAIPGP) directs the protein to the mitochondrion. Y136 (proton donor) is an active-site residue. Residue R189 participates in NAD(+) binding. Catalysis depends on K207, which acts as the Proton acceptor. Positions 278, 279, and 302 each coordinate a divalent metal cation. The NAD(+) site is built by D302 and N449.

The protein belongs to the malic enzymes family. As to quaternary structure, homodimer. Heterodimer of two related subunits in NAD-MEH complex. Interacts with NAD-ME1. Mg(2+) is required as a cofactor. Requires Mn(2+) as cofactor. In terms of tissue distribution, expressed in leaves, stems, flowers, and roots (at protein level). Present in pollen.

It is found in the mitochondrion. It catalyses the reaction (S)-malate + NAD(+) = pyruvate + CO2 + NADH. Its activity is regulated as follows. Activated by 2-ketoglutarate, phosphoenolpyruvate (PEP), fructose 1,6-biphosphate (FBP) and coenzyme A (acetyl-CoA and CoA) as homodimer and by oxaloacetate (OAA), 2-ketoglutarate, succinate, fumarate and CoA as heterodimer NAD-MEH. Repressed by succinate and fumarate as homodimer, in the presence of NAD(+) and competitively toward the substrate L-malate. Involved in the regulation of sugars and amino acids metabolisms during the night period. This chain is NAD-dependent malic enzyme 2, mitochondrial (NAD-ME2), found in Arabidopsis thaliana (Mouse-ear cress).